The sequence spans 542 residues: uncharacterized protein (542 aa).

A run of 5 helical transmembrane segments spans residues 4-23 (FVENQLLALVAIMGIGLLLG), 28-47 (FGFRLGVAAVLFVGLAFSTI), 51-70 (ITVPPLIYVVGLALFVYTIG), 91-113 (LALGAIIATTAIAWVVIKALGLA), and 160-182 (YSLTYPLGVLVVILTIAVCGGLF). RCK C-terminal domains follow at residues 190–272 (AKNA…LLGE) and 274–355 (VDGH…IFGD). 5 helical membrane-spanning segments follow: residues 363–385 (FNLVPLVVGLSLGVLVGMMEFPL), 390–412 (ALSLGNAGGPLLIALLLGAMGRT), 425–447 (LALRQLGITMFLAAIGTTAGAGF), 457–479 (LLIIGVGALLTLVISVLVLVIGH), and 519–541 (YTSVYPLAMVAKIIAAQVLLFLL).

The protein belongs to the AAE transporter (TC 2.A.81) family.

The protein localises to the cell membrane. This is an uncharacterized protein from Corynebacterium efficiens (strain DSM 44549 / YS-314 / AJ 12310 / JCM 11189 / NBRC 100395).